A 175-amino-acid chain; its full sequence is Coagulogen (175 aa).

8 disulfide bridges follow: Cys-8–Cys-167, Cys-10–Cys-95, Cys-60–Cys-161, Cys-65–Cys-121, Cys-75–Cys-168, Cys-88–Cys-140, Cys-127–Cys-170, and Cys-134–Cys-172.

Belongs to the coagulin family. In terms of assembly, coagulogen is cleaved after Arg-18 and Arg-46 by a clotting enzyme contained in the hemocyte and activated by a bacterial endotoxin (lipopolysaccharide). This cleavage releases the peptide C and leaves 2 chains of coagulin, A and B, linked by two disulfide bonds. Coagulin molecules interlink to form a gel. As to expression, hemolymph.

Its subcellular location is the secreted. In terms of biological role, coagulogen is a gel-forming protein of hemolymph; it hinders the spread of invaders by immobilizing them. This Carcinoscorpius rotundicauda (Mangrove horseshoe crab) protein is Coagulogen.